A 168-amino-acid polypeptide reads, in one-letter code: Plastocyanin A, chloroplastic (168 aa).

A chloroplast-targeting transit peptide spans 1–69 (MATVTSAAVS…SAMIASNAMA (69 aa)). One can recognise a Plastocyanin-like domain in the interval 70–168 (IDVLLGADDG…AGMVGKVTVN (99 aa)). Cu cation contacts are provided by histidine 106, cysteine 153, histidine 156, and methionine 161.

This sequence belongs to the plastocyanin family. Cu(2+) is required as a cofactor.

It is found in the plastid. The protein localises to the chloroplast thylakoid membrane. Functionally, participates in electron transfer between P700 and the cytochrome b6-f complex in photosystem I. This Populus nigra (Lombardy poplar) protein is Plastocyanin A, chloroplastic (PETE).